Here is a 656-residue protein sequence, read N- to C-terminus: Cyclic AMP-dependent transcription factor ATF-6 alpha (656 aa).

A transcription activation region spans residues 1-137 (MESPFSPVLP…SPSSAEPLKE (137 aa)). A Glycyl lysine isopeptide (Lys-Gly) (interchain with G-Cter in SUMO2) cross-link involves residue K75. Composition is skewed to low complexity over residues 81–101 (LSPA…SCSS) and 111–121 (LLSSSQSPLSL). A disordered region spans residues 81–171 (LSPASSSCSV…SKPSVQPKPL (91 aa)). Residue K139 forms a Glycyl lysine isopeptide (Lys-Gly) (interchain with G-Cter in ubiquitin) linkage. The 64-residue stretch at 293-356 (VLRRQQRMIK…DQVVSENQRL (64 aa)) folds into the bZIP domain. The segment at 295 to 326 (RRQQRMIKNRESACQSRKKKKEYMLGLEARLK) is basic motif. Residues 335-342 (LKKENGSL) are leucine-zipper. Residues 378–398 (NYGPMSMLEQDSRRVKPSVSP) traverse the membrane as a helical; Signal-anchor for type II membrane protein segment. Topologically, residues 399-656 (ANQRRHLLEF…VVSTLPESVQ (258 aa)) are lumenal. Residues 455–575 (QPLINTTESL…ATTHNKTTRP (121 aa)) are interaction with THBS4. 3 N-linked (GlcNAc...) asparagine glycosylation sites follow: N459, N570, and N629. The tract at residues 632–656 (STFFGSPPTATETTHVVSTLPESVQ) is disordered.

The protein belongs to the bZIP family. ATF subfamily. Interacts with XBP1 isoform 2; the interaction occurs in a ER stress-dependent manner. Interacts with LACC1. In terms of assembly, interacts with THBS4 (via EGF-like 3; calcium-binding domain) which facilitates its processing, activation and nuclear translocation. Interacts (via lumenal domain) with THBS1. As to quaternary structure, homodimer and heterodimer with ATF6-beta. The dimer interacts with the nuclear transcription factor Y (NF-Y) trimer through direct binding to NF-Y subunit C (NF-YC). Also interacts with the transcription factors GTF2I, YY1 and SRF. During unfolded protein response, a fragment of approximately 50 kDa containing the cytoplasmic transcription factor domain is released by proteolysis. The cleavage seems to be performed sequentially by site-1 (MBTPS1, S1P) and site-2 (MBTPS2, S2P) proteases. Post-translationally, N-glycosylated; in its luminal domain. The glycosylation status may serve as a sensor for ER homeostasis, resulting in ATF6 activation to trigger the unfolded protein response (UPR). In terms of processing, ubiquitinated by RNF186 at Lys-139, which is required for pattern recognition receptor-induced unfolded protein response-associated outcomes.

The protein resides in the endoplasmic reticulum membrane. Its subcellular location is the golgi apparatus membrane. It localises to the nucleus. Its function is as follows. Precursor of the transcription factor form (Processed cyclic AMP-dependent transcription factor ATF-6 alpha), which is embedded in the endoplasmic reticulum membrane. Endoplasmic reticulum stress promotes processing of this form, releasing the transcription factor form that translocates into the nucleus, where it activates transcription of genes involved in the unfolded protein response (UPR). Transcription factor that initiates the unfolded protein response (UPR) during endoplasmic reticulum stress by activating transcription of genes involved in the UPR. Binds DNA on the 5'-CCAC[GA]-3'half of the ER stress response element (ERSE) (5'-CCAAT-N(9)-CCAC[GA]-3') and of ERSE II (5'-ATTGG-N-CCACG-3'). Binding to ERSE requires binding of NF-Y to ERSE. Could also be involved in activation of transcription by the serum response factor. May play a role in foveal development and cone function in the retina. The chain is Cyclic AMP-dependent transcription factor ATF-6 alpha (Atf6) from Rattus norvegicus (Rat).